A 352-amino-acid chain; its full sequence is Probable cytosolic iron-sulfur protein assembly protein CIAO1 homolog (352 aa).

7 WD repeats span residues 14-53 (GHDD…PSEQ), 63-102 (CHTR…WEQV), 107-146 (GHEN…EFEC), 152-191 (GHSQ…WGCA), 200-240 (GHES…TSTP), 268-306 (HHRR…LTQP), and 319-352 (AHGA…WWLR).

It belongs to the WD repeat CIA1 family.

Its function is as follows. Essential component of the cytosolic iron-sulfur (Fe/S) protein assembly machinery. Required for the maturation of extramitochondrial Fe/S proteins. This chain is Probable cytosolic iron-sulfur protein assembly protein CIAO1 homolog, found in Chlamydomonas reinhardtii (Chlamydomonas smithii).